The chain runs to 279 residues: Large ribosomal subunit protein uL2 (279 aa).

2 disordered regions span residues 30–59 (EKSL…GGHK) and 225–279 (VMNP…KNKR). A compositionally biased stretch (basic residues) spans 50-59 (TTRHKGGGHK). Positions 253–268 (PEGRTRRPNKESDKLI) are enriched in basic and acidic residues. The span at 269–279 (VRRRRTGKNKR) shows a compositional bias: basic residues.

The protein belongs to the universal ribosomal protein uL2 family. In terms of assembly, part of the 50S ribosomal subunit. Forms a bridge to the 30S subunit in the 70S ribosome.

Functionally, one of the primary rRNA binding proteins. Required for association of the 30S and 50S subunits to form the 70S ribosome, for tRNA binding and peptide bond formation. It has been suggested to have peptidyltransferase activity; this is somewhat controversial. Makes several contacts with the 16S rRNA in the 70S ribosome. In Kocuria rhizophila (strain ATCC 9341 / DSM 348 / NBRC 103217 / DC2201), this protein is Large ribosomal subunit protein uL2.